Here is a 191-residue protein sequence, read N- to C-terminus: Ribonuclease M5 1 (191 aa).

In terms of domain architecture, Toprim spans 10 to 93 (KEVIVVEGKD…AFLTKHDAAP (84 aa)). Mg(2+) is bound by residues E16, D62, and D64.

It belongs to the ribonuclease M5 family. Requires Mg(2+) as cofactor.

It localises to the cytoplasm. It carries out the reaction Endonucleolytic cleavage of RNA, removing 21 and 42 nucleotides, respectively, from the 5'- and 3'-termini of a 5S-rRNA precursor.. Required for correct processing of both the 5' and 3' ends of 5S rRNA precursor. Cleaves both sides of a double-stranded region yielding mature 5S rRNA in one step. In Ligilactobacillus salivarius (strain CECT 5713) (Lactobacillus salivarius), this protein is Ribonuclease M5 1.